A 461-amino-acid polypeptide reads, in one-letter code: Cysteine--tRNA ligase (461 aa).

Cys-30 lines the Zn(2+) pocket. The 'HIGH' region motif lies at 32-42; that stretch reads VTVYDLCHIGH. The Zn(2+) site is built by Cys-211, His-236, and Glu-240. The short motif at 268-272 is the 'KMSKS' region element; the sequence is KMSKS. Position 271 (Lys-271) interacts with ATP.

Belongs to the class-I aminoacyl-tRNA synthetase family. In terms of assembly, monomer. Zn(2+) is required as a cofactor.

Its subcellular location is the cytoplasm. The enzyme catalyses tRNA(Cys) + L-cysteine + ATP = L-cysteinyl-tRNA(Cys) + AMP + diphosphate. This Shewanella sp. (strain MR-7) protein is Cysteine--tRNA ligase.